The following is a 277-amino-acid chain: Putative phosphoenolpyruvate synthase regulatory protein (277 aa).

157-164 serves as a coordination point for ADP; sequence GVSRCGKT.

This sequence belongs to the pyruvate, phosphate/water dikinase regulatory protein family. PSRP subfamily.

The enzyme catalyses [pyruvate, water dikinase] + ADP = [pyruvate, water dikinase]-phosphate + AMP + H(+). It carries out the reaction [pyruvate, water dikinase]-phosphate + phosphate + H(+) = [pyruvate, water dikinase] + diphosphate. Bifunctional serine/threonine kinase and phosphorylase involved in the regulation of the phosphoenolpyruvate synthase (PEPS) by catalyzing its phosphorylation/dephosphorylation. The protein is Putative phosphoenolpyruvate synthase regulatory protein of Klebsiella pneumoniae subsp. pneumoniae (strain ATCC 700721 / MGH 78578).